The primary structure comprises 202 residues: Snake venom metalloproteinase TM-1 (202 aa).

Pyrrolidone carboxylic acid is present on Q1. The 196-residue stretch at 7–202 (RYVMLAIVAD…TNPQCILNAP (196 aa)) folds into the Peptidase M12B domain. Disulfide bonds link C118-C197, C159-C181, and C161-C164. H143 is a Zn(2+) binding site. E144 is a catalytic residue. Zn(2+)-binding residues include H147 and H153.

It belongs to the venom metalloproteinase (M12B) family. P-I subfamily. As to quaternary structure, monomer. Zn(2+) is required as a cofactor. The N-terminus is blocked. Post-translationally, not glycosylated. As to expression, expressed by the venom gland.

The protein resides in the secreted. Inhibited by EDTA and 1,10-phenanthroline. Is also inhibited by endogenous tripeptide inhibitors pyroGlu-Asn-Trp, pyroGlu-Gln-Trp, and pyroGlu-Lys-Trp. Its function is as follows. Potent fibrinogenolytic protease which cleaves mainly the Aalpha (FGA) and Bbeta (FGB) chains of fibrinogen and slightly the gamma chain (FGG). Shows preference for substrates having a moderate-size and hydrophobic residue at the P1' position. Preferentially cleaves Ala-|-Leu and Tyr-|-Leu bonds. Is more susceptible to tripeptide inhibitors than TM-3 (AC O57413). This chain is Snake venom metalloproteinase TM-1, found in Protobothrops mucrosquamatus (Taiwan habu).